We begin with the raw amino-acid sequence, 29 residues long: MAEAFYILIGFLIMAAIIVMAVLYLENHS.

A helical transmembrane segment spans residues 5–25; sequence FYILIGFLIMAAIIVMAVLYL.

The protein resides in the cell inner membrane. The polypeptide is Protein YldA (Escherichia coli (strain K12)).